Here is a 382-residue protein sequence, read N- to C-terminus: Lipid-A-disaccharide synthase (382 aa).

The protein belongs to the LpxB family.

It carries out the reaction a lipid X + a UDP-2-N,3-O-bis[(3R)-3-hydroxyacyl]-alpha-D-glucosamine = a lipid A disaccharide + UDP + H(+). The protein operates within bacterial outer membrane biogenesis; LPS lipid A biosynthesis. In terms of biological role, condensation of UDP-2,3-diacylglucosamine and 2,3-diacylglucosamine-1-phosphate to form lipid A disaccharide, a precursor of lipid A, a phosphorylated glycolipid that anchors the lipopolysaccharide to the outer membrane of the cell. This Dechloromonas aromatica (strain RCB) protein is Lipid-A-disaccharide synthase.